The primary structure comprises 322 residues: Sideroflexin-1 (322 aa).

Position 2 is an N-acetylserine (S2). At S2–T102 the chain is on the mitochondrial matrix side. A helical membrane pass occupies residues I103 to W120. Residues Q121 to E146 lie on the Mitochondrial intermembrane side of the membrane. Residues L147–A167 traverse the membrane as a helical segment. At L168–P174 the chain is on the mitochondrial matrix side. Residues L175 to L195 traverse the membrane as a helical segment. Topologically, residues M196 to Q228 are mitochondrial intermembrane. Residues V229 to N249 form a helical membrane-spanning segment. At T250–P266 the chain is on the mitochondrial matrix side. Residues I267 to F287 traverse the membrane as a helical segment. Over P288–L322 the chain is Mitochondrial intermembrane.

It belongs to the sideroflexin family. Widely expressed, with highest expression in kidney and liver.

It localises to the mitochondrion inner membrane. It catalyses the reaction L-serine(in) = L-serine(out). It carries out the reaction L-alanine(in) = L-alanine(out). The enzyme catalyses L-cysteine(in) = L-cysteine(out). Amino acid transporter importing serine, an essential substrate of the mitochondrial branch of the one-carbon pathway, into mitochondria. Mitochondrial serine is then converted to glycine and formate, which exits to the cytosol where it is used to generate the charged folates that serve as one-carbon donors. May also transport other amino acids including alanine and cysteine. The chain is Sideroflexin-1 from Mus musculus (Mouse).